We begin with the raw amino-acid sequence, 378 residues long: Succinyl-diaminopimelate desuccinylase (378 aa).

Residue His-77 coordinates Zn(2+). Asp-79 is an active-site residue. Asp-108 serves as a coordination point for Zn(2+). Catalysis depends on Glu-138, which acts as the Proton acceptor. Residues Glu-139, Glu-167, and His-350 each coordinate Zn(2+).

This sequence belongs to the peptidase M20A family. DapE subfamily. Homodimer. The cofactor is Zn(2+). Requires Co(2+) as cofactor.

It catalyses the reaction N-succinyl-(2S,6S)-2,6-diaminopimelate + H2O = (2S,6S)-2,6-diaminopimelate + succinate. The protein operates within amino-acid biosynthesis; L-lysine biosynthesis via DAP pathway; LL-2,6-diaminopimelate from (S)-tetrahydrodipicolinate (succinylase route): step 3/3. In terms of biological role, catalyzes the hydrolysis of N-succinyl-L,L-diaminopimelic acid (SDAP), forming succinate and LL-2,6-diaminopimelate (DAP), an intermediate involved in the bacterial biosynthesis of lysine and meso-diaminopimelic acid, an essential component of bacterial cell walls. This is Succinyl-diaminopimelate desuccinylase from Erythrobacter litoralis (strain HTCC2594).